A 188-amino-acid polypeptide reads, in one-letter code: Apolipophorin-3 (188 aa).

Positions 1–17 (MVAKLFVLVACIALSHA) are cleaved as a signal peptide. Residues 18-22 (AMVRR) constitute a propeptide that is removed on maturation.

The protein belongs to the insect apolipophorin-3 family. As to quaternary structure, equilibrium between a soluble monomer and a bound lipoprotein form. Apolipophorin-3 associates with lipophorin during lipid loading until each particle contains 9 or 14 molecules of apolipophorin-3. In terms of tissue distribution, expressed in fat body and secreted in hemolymph. Also expressed in ovary and testis at lower levels.

Its subcellular location is the secreted. Functionally, assists in the loading of diacylglycerol, generated from triacylglycerol stores in the fat body through the action of adipokinetic hormone, into lipophorin, the hemolymph lipoprotein. It increases the lipid carrying capacity of lipophorin by covering the expanding hydrophobic surface resulting from diacylglycerol uptake. It thus plays a critical role in the transport of lipids during flight in several species of insects. The sequence is that of Apolipophorin-3 from Spodoptera litura (Asian cotton leafworm).